The sequence spans 397 residues: CCA-adding enzyme (397 aa).

ATP is bound by residues Gly-26 and Arg-29. CTP contacts are provided by Gly-26 and Arg-29. Residues Asp-39 and Asp-41 each coordinate Mg(2+). 5 residues coordinate ATP: Arg-110, Asp-153, Arg-156, Arg-159, and Arg-162. CTP is bound by residues Arg-110, Asp-153, Arg-156, Arg-159, and Arg-162.

It belongs to the tRNA nucleotidyltransferase/poly(A) polymerase family. Bacterial CCA-adding enzyme type 3 subfamily. As to quaternary structure, homodimer. The cofactor is Mg(2+).

It catalyses the reaction a tRNA precursor + 2 CTP + ATP = a tRNA with a 3' CCA end + 3 diphosphate. It carries out the reaction a tRNA with a 3' CCA end + 2 CTP + ATP = a tRNA with a 3' CCACCA end + 3 diphosphate. Catalyzes the addition and repair of the essential 3'-terminal CCA sequence in tRNAs without using a nucleic acid template. Adds these three nucleotides in the order of C, C, and A to the tRNA nucleotide-73, using CTP and ATP as substrates and producing inorganic pyrophosphate. tRNA 3'-terminal CCA addition is required both for tRNA processing and repair. Also involved in tRNA surveillance by mediating tandem CCA addition to generate a CCACCA at the 3' terminus of unstable tRNAs. While stable tRNAs receive only 3'-terminal CCA, unstable tRNAs are marked with CCACCA and rapidly degraded. The sequence is that of CCA-adding enzyme from Bacillus mycoides (strain KBAB4) (Bacillus weihenstephanensis).